We begin with the raw amino-acid sequence, 1060 residues long: Carbamoyl phosphate synthase large chain (1060 aa).

The interval 1-401 (MPKRQDIHKI…SLLKAVRSLE (401 aa)) is carboxyphosphate synthetic domain. ATP contacts are provided by Arg129, Arg169, Gly175, Gly176, Arg208, Ile210, Glu215, Gly241, Val242, His243, Gln284, and Glu298. Residues 133 to 327 (KNLMQKLHEP…IAKMAAKIAV (195 aa)) form the ATP-grasp 1 domain. Positions 284, 298, and 300 each coordinate Mg(2+). 3 residues coordinate Mn(2+): Gln284, Glu298, and Asn300. Positions 402–546 (VGLIHPERPA…YSTYESSTES (145 aa)) are oligomerization domain. A carbamoyl phosphate synthetic domain region spans residues 547 to 929 (VKSDKPSVLV…ALYKAFEAAG (383 aa)). Residues 671-861 (DQVIKSLKLP…LAQVATLAIL (191 aa)) form the ATP-grasp 2 domain. Arg707, His746, Leu748, Glu752, Gly777, Ile778, His779, Ser780, Gln820, and Glu832 together coordinate ATP. Mg(2+) contacts are provided by Gln820, Glu832, and Asn834. Residues Gln820, Glu832, and Asn834 each contribute to the Mn(2+) site. Positions 930-1060 (MHLPQFGRAL…QAFSISPIKS (131 aa)) constitute an MGS-like domain. The interval 930-1060 (MHLPQFGRAL…QAFSISPIKS (131 aa)) is allosteric domain.

The protein belongs to the CarB family. In terms of assembly, composed of two chains; the small (or glutamine) chain promotes the hydrolysis of glutamine to ammonia, which is used by the large (or ammonia) chain to synthesize carbamoyl phosphate. Tetramer of heterodimers (alpha,beta)4. Mg(2+) is required as a cofactor. Mn(2+) serves as cofactor.

It carries out the reaction hydrogencarbonate + L-glutamine + 2 ATP + H2O = carbamoyl phosphate + L-glutamate + 2 ADP + phosphate + 2 H(+). It catalyses the reaction hydrogencarbonate + NH4(+) + 2 ATP = carbamoyl phosphate + 2 ADP + phosphate + 2 H(+). Its pathway is amino-acid biosynthesis; L-arginine biosynthesis; carbamoyl phosphate from bicarbonate: step 1/1. The protein operates within pyrimidine metabolism; UMP biosynthesis via de novo pathway; (S)-dihydroorotate from bicarbonate: step 1/3. Functionally, large subunit of the glutamine-dependent carbamoyl phosphate synthetase (CPSase). CPSase catalyzes the formation of carbamoyl phosphate from the ammonia moiety of glutamine, carbonate, and phosphate donated by ATP, constituting the first step of 2 biosynthetic pathways, one leading to arginine and/or urea and the other to pyrimidine nucleotides. The large subunit (synthetase) binds the substrates ammonia (free or transferred from glutamine from the small subunit), hydrogencarbonate and ATP and carries out an ATP-coupled ligase reaction, activating hydrogencarbonate by forming carboxy phosphate which reacts with ammonia to form carbamoyl phosphate. The polypeptide is Carbamoyl phosphate synthase large chain (Lacticaseibacillus paracasei (strain ATCC 334 / BCRC 17002 / CCUG 31169 / CIP 107868 / KCTC 3260 / NRRL B-441) (Lactobacillus paracasei)).